Here is a 501-residue protein sequence, read N- to C-terminus: ATP synthase subunit alpha (501 aa).

Residue 169 to 176 (GDRQTGKT) coordinates ATP.

The protein belongs to the ATPase alpha/beta chains family. As to quaternary structure, F-type ATPases have 2 components, CF(1) - the catalytic core - and CF(0) - the membrane proton channel. CF(1) has five subunits: alpha(3), beta(3), gamma(1), delta(1), epsilon(1). CF(0) has three main subunits: a(1), b(2) and c(9-12). The alpha and beta chains form an alternating ring which encloses part of the gamma chain. CF(1) is attached to CF(0) by a central stalk formed by the gamma and epsilon chains, while a peripheral stalk is formed by the delta and b chains.

It is found in the cell membrane. It carries out the reaction ATP + H2O + 4 H(+)(in) = ADP + phosphate + 5 H(+)(out). Produces ATP from ADP in the presence of a proton gradient across the membrane. The alpha chain is a regulatory subunit. The chain is ATP synthase subunit alpha from Streptococcus gordonii (strain Challis / ATCC 35105 / BCRC 15272 / CH1 / DL1 / V288).